The sequence spans 95 residues: Small ribosomal subunit protein uS19 (95 aa).

Belongs to the universal ribosomal protein uS19 family.

Its function is as follows. Protein S19 forms a complex with S13 that binds strongly to the 16S ribosomal RNA. In Chloroflexus aurantiacus (strain ATCC 29366 / DSM 635 / J-10-fl), this protein is Small ribosomal subunit protein uS19.